The sequence spans 298 residues: N-acetylmuramic acid 6-phosphate etherase (298 aa).

Positions 54 to 217 constitute an SIS domain; it reads TIKAMKQGGR…STTVMIGLGK (164 aa). Glu82 (proton donor) is an active-site residue. Residue Glu113 is part of the active site.

The protein belongs to the GCKR-like family. MurNAc-6-P etherase subfamily. As to quaternary structure, homodimer.

It catalyses the reaction N-acetyl-D-muramate 6-phosphate + H2O = N-acetyl-D-glucosamine 6-phosphate + (R)-lactate. The protein operates within amino-sugar metabolism; N-acetylmuramate degradation. Specifically catalyzes the cleavage of the D-lactyl ether substituent of MurNAc 6-phosphate, producing GlcNAc 6-phosphate and D-lactate. This is N-acetylmuramic acid 6-phosphate etherase from Halalkalibacterium halodurans (strain ATCC BAA-125 / DSM 18197 / FERM 7344 / JCM 9153 / C-125) (Bacillus halodurans).